The primary structure comprises 259 residues: Haloacid dehalogenase-like hydrolase domain-containing protein 2 (259 aa).

Mg(2+)-binding residues include Asp-13 and Ser-15. Substrate-binding positions include 13–15 (DLS) and 46–47 (TN). Positions 47–71 (NTTKESKQDLLERLKKLEFDISEDE) form a coiled coil. At Lys-50 the chain carries N6-succinyllysine. Lys-179 is a binding site for substrate. Asp-204 is a binding site for Mg(2+).

Belongs to the HAD-like hydrolase superfamily. Mg(2+) serves as cofactor.

This chain is Haloacid dehalogenase-like hydrolase domain-containing protein 2 (HDHD2), found in Bos taurus (Bovine).